Consider the following 436-residue polypeptide: 3-ketoacyl-CoA thiolase (436 aa).

Cys-99 serves as the catalytic Acyl-thioester intermediate. Active-site proton acceptor residues include His-392 and Cys-422.

The protein belongs to the thiolase-like superfamily. Thiolase family. Heterotetramer of two alpha chains (FadJ) and two beta chains (FadI).

It is found in the cytoplasm. It carries out the reaction an acyl-CoA + acetyl-CoA = a 3-oxoacyl-CoA + CoA. It functions in the pathway lipid metabolism; fatty acid beta-oxidation. Catalyzes the final step of fatty acid oxidation in which acetyl-CoA is released and the CoA ester of a fatty acid two carbons shorter is formed. This is 3-ketoacyl-CoA thiolase from Escherichia coli O127:H6 (strain E2348/69 / EPEC).